The following is a 188-amino-acid chain: PRA1 family protein 3 (188 aa).

Met-1 is modified (N-acetylmethionine). Over 1-35 (MDVNIAPLRAWDDFFPGSDRFARPDFRDISKWNNR) the chain is Cytoplasmic. 2 helical membrane passes run 36 to 56 (VVSN…MMIS) and 57 to 77 (IVGF…VLVF). The Cytoplasmic portion of the chain corresponds to 78–93 (TGFVWAAHNKDVLRRM). The next 2 membrane-spanning stretches (helical) occupy residues 94–114 (KKRY…FLIS) and 115–135 (MFGG…LMFI). The tract at residues 103 to 117 (MVVMLASYFLISMFG) is required for homodimer formation and heterodimer formation with ARL6IP1. Topologically, residues 136–188 (HASLRLRNLKNKLENKMEGIGLKRTPMGIVLDALEQQEEGINRLTDYISKVKE) are cytoplasmic. The segment at 136-188 (HASLRLRNLKNKLENKMEGIGLKRTPMGIVLDALEQQEEGINRLTDYISKVKE) is targeting to endoplasmic reticulum membrane.

It belongs to the PRA1 family. As to quaternary structure, homodimer. Heterodimer with ARL6IP1. Forms multimers. Interacts with ARL6. Interacts with prenylated RAB1A and RAB3A. Interacts with SLC1A1/EAAC1. Interacts with RTN2 (via first transmembrane domain). Does not interact with VAMP1, VAMP2 or VAMP3.

It localises to the endoplasmic reticulum membrane. Its subcellular location is the cell membrane. The protein resides in the cytoplasm. It is found in the cytoskeleton. In terms of biological role, regulates intracellular concentrations of taurine and glutamate. Negatively modulates SLC1A1/EAAC1 glutamate transport activity by decreasing its affinity for glutamate in a PKC activity-dependent manner. Plays a role in the retention of SLC1A1/EAAC1 in the endoplasmic reticulum. This Homo sapiens (Human) protein is PRA1 family protein 3 (ARL6IP5).